Consider the following 306-residue polypeptide: MASTHSSLTTVQNNANNKSNRTLNTERRLSMESSVFTLYNKAADELDTSQRSAFQACHREFLAEFIGTVILVLLTCGFCAEQTLHIEESKSWLTSSFGSGLSVLIGICVSGHVSGAHLNPAVTIAFCIFSGFPIRKVPSYITAQLLGAFAGAALLYIIIEPAIVQFDGGQRYILGEKSTAGIFGTYPPLYVGIGSAIASEIMGTAMLLLVIMVTGHPNNLPYKSAQGAMIALGITTISLCIGYTSGFSLNPARDFGPRLFTAIAGWGFDVFKVYHYYALVPMFAPILGGLVGLMLMMPFSFLSVRA.

The span at 1–23 shows a compositional bias: polar residues; it reads MASTHSSLTTVQNNANNKSNRTL. Residues 1-24 are disordered; sequence MASTHSSLTTVQNNANNKSNRTLN. The Cytoplasmic portion of the chain corresponds to 1-59; that stretch reads MASTHSSLTTVQNNANNKSNRTLNTERRLSMESSVFTLYNKAADELDTSQRSAFQACHR. A helical membrane pass occupies residues 60–80; sequence EFLAEFIGTVILVLLTCGFCA. Topologically, residues 81 to 92 are extracellular; sequence EQTLHIEESKSW. A helical membrane pass occupies residues 93-113; the sequence is LTSSFGSGLSVLIGICVSGHV. Residues 114 to 145 lie on the Cytoplasmic side of the membrane; sequence SGAHLNPAVTIAFCIFSGFPIRKVPSYITAQL. An NPA 1 motif is present at residues 119 to 121; sequence NPA. A helical membrane pass occupies residues 146–166; the sequence is LGAFAGAALLYIIIEPAIVQF. At 167–192 the chain is on the extracellular side; sequence DGGQRYILGEKSTAGIFGTYPPLYVG. A helical membrane pass occupies residues 193–213; that stretch reads IGSAIASEIMGTAMLLLVIMV. At 214-226 the chain is on the cytoplasmic side; it reads TGHPNNLPYKSAQ. The helical transmembrane segment at 227–247 threads the bilayer; the sequence is GAMIALGITTISLCIGYTSGF. The Extracellular portion of the chain corresponds to 248–278; sequence SLNPARDFGPRLFTAIAGWGFDVFKVYHYYA. The short motif at 250 to 252 is the NPA 2 element; that stretch reads NPA. The chain crosses the membrane as a helical span at residues 279–299; it reads LVPMFAPILGGLVGLMLMMPF. The Cytoplasmic segment spans residues 300–306; sequence SFLSVRA.

This sequence belongs to the MIP/aquaporin (TC 1.A.8) family.

The protein localises to the cell membrane. It carries out the reaction H2O(in) = H2O(out). Water channel required to facilitate the transport of water across membranes. Contributes to water uptake of spores during the early stages of spore germination. Aquaporins AQP1 and AQP2 act as extracellular pH sensors and enable the spores to hydrate under favorable conditions and to commence germination. Wounded vegetables and fruit present acidic pH, so the optimal pH range for germination is adapted to the relevant host pH. This Rhizopus delemar (strain RA 99-880 / ATCC MYA-4621 / FGSC 9543 / NRRL 43880) (Mucormycosis agent) protein is Aquaporin-1.